We begin with the raw amino-acid sequence, 739 residues long: Vascular cell adhesion protein 1 (739 aa).

Positions Met1 to Ala24 are cleaved as a signal peptide. Ig-like C2-type domains are found at residues Phe25–Glu105, Gln109–Gln212, Pro223–Gln309, Pro312–Glu399, Glu408–Tyr506, Pro511–Ile595, and Pro600–Asp684. Topologically, residues Phe25 to Glu698 are extracellular. Intrachain disulfides connect Cys47–Cys95, Cys52–Cys99, Cys137–Cys195, Cys246–Cys291, and Cys335–Cys383. N-linked (GlcNAc...) asparagine glycans are attached at residues Asn273, Asn365, Asn417, Asn463, Asn531, and Asn561. Cysteines 534 and 579 form a disulfide. The chain crosses the membrane as a helical span at residues Leu699 to Ala720. Topologically, residues Arg721 to Val739 are cytoplasmic.

Cleaved by the metalloproteinase ADAM17 to generate the soluble form. Post-translationally, sialoglycoprotein. In terms of processing, ubiquitinated by TRIM65 via 'Lys-48'-linked ubiquitination; leading to proteasomal degradation. Expressed on inflamed vascular endothelium, as well as on macrophage-like and dendritic cell types in both normal and inflamed tissue.

Its subcellular location is the cell membrane. It localises to the secreted. Cell adhesion glycoprotein predominantly expressed on the surface of endothelial cells that plays an important role in immune surveillance and inflammation. Acts as a major regulator of leukocyte adhesion to the endothelium through interaction with different types of integrins. During inflammatory responses, binds ligands on the surface of activated endothelial cells to initiate the activation of calcium channels and the plasma membrane-associated small GTPase RAC1 leading to leukocyte transendothelial migration. Also serves as a quality-control checkpoint for entry into bone marrow by providing a 'don't-eat-me' stamping in the context of major histocompatibility complex (MHC) class-I presentation. This Homo sapiens (Human) protein is Vascular cell adhesion protein 1 (VCAM1).